The sequence spans 55 residues: Large ribosomal subunit protein bL33 (55 aa).

This sequence belongs to the bacterial ribosomal protein bL33 family.

This chain is Large ribosomal subunit protein bL33, found in Brucella abortus (strain S19).